Consider the following 83-residue polypeptide: Small ribosomal subunit protein bS21 (83 aa).

The segment at 40–83 is disordered; that stretch reads TPMDERRRKARSASKRNKVKWRYSNKSEETASETAETPASAPEA. Residues 47 to 62 show a composition bias toward basic residues; that stretch reads RKARSASKRNKVKWRY. The span at 71–83 shows a compositional bias: low complexity; the sequence is SETAETPASAPEA.

Belongs to the bacterial ribosomal protein bS21 family.

This is Small ribosomal subunit protein bS21 from Akkermansia muciniphila (strain ATCC BAA-835 / DSM 22959 / JCM 33894 / BCRC 81048 / CCUG 64013 / CIP 107961 / Muc).